The primary structure comprises 273 residues: Large ribosomal subunit protein uL2 (273 aa).

Residues alanine 224 to lysine 260 are disordered. The segment covering lysine 251–lysine 260 has biased composition (basic residues).

It belongs to the universal ribosomal protein uL2 family. In terms of assembly, part of the 50S ribosomal subunit. Forms a bridge to the 30S subunit in the 70S ribosome.

Functionally, one of the primary rRNA binding proteins. Required for association of the 30S and 50S subunits to form the 70S ribosome, for tRNA binding and peptide bond formation. It has been suggested to have peptidyltransferase activity; this is somewhat controversial. Makes several contacts with the 16S rRNA in the 70S ribosome. The sequence is that of Large ribosomal subunit protein uL2 from Orientia tsutsugamushi (strain Ikeda) (Rickettsia tsutsugamushi).